We begin with the raw amino-acid sequence, 232 residues long: MTNYREIAWQGLWKNNPGLVQLLGLCPLLAVTATITNALGLGVATMLVLIGSNILVSLVRDYVPKEIRIPVFVMIIAALVTTVQLLINAYAYGLYLSLGIFLPLIVTNCIIIGRAEAFASRNNAFSAAFDGLMMGLGFTLVLAVLGATRELLGQGTLFDGADQLLGPWAKSLTIHVWQVDTPFLLAMLPPGAFIVMGLLIALKNVIDKKLKEHQPQVATEPSVTRARITKVS.

6 helical membrane-spanning segments follow: residues 18-38 (GLVQLLGLCPLLAVTATITNA), 39-59 (LGLGVATMLVLIGSNILVSLV), 69-89 (IPVFVMIIAALVTTVQLLINA), 93-113 (GLYLSLGIFLPLIVTNCIIIG), 127-147 (AAFDGLMMGLGFTLVLAVLGA), and 182-202 (PFLLAMLPPGAFIVMGLLIAL).

It belongs to the NqrDE/RnfAE family. In terms of assembly, the complex is composed of six subunits: RnfA, RnfB, RnfC, RnfD, RnfE and RnfG.

Its subcellular location is the cell inner membrane. Its function is as follows. Part of a membrane-bound complex that couples electron transfer with translocation of ions across the membrane. The polypeptide is Ion-translocating oxidoreductase complex subunit E (Shewanella sp. (strain W3-18-1)).